The sequence spans 367 residues: D-alanine--D-alanine ligase (367 aa).

The ATP-grasp domain occupies Lys-145–Ala-351. His-174–Ile-229 serves as a coordination point for ATP. Residues Asp-306, Glu-318, and Asn-320 each contribute to the Mg(2+) site.

Belongs to the D-alanine--D-alanine ligase family. The cofactor is Mg(2+). Mn(2+) is required as a cofactor.

Its subcellular location is the cytoplasm. The enzyme catalyses 2 D-alanine + ATP = D-alanyl-D-alanine + ADP + phosphate + H(+). Its pathway is cell wall biogenesis; peptidoglycan biosynthesis. In terms of biological role, cell wall formation. The sequence is that of D-alanine--D-alanine ligase from Bradyrhizobium sp. (strain BTAi1 / ATCC BAA-1182).